The primary structure comprises 566 residues: ATP-binding protein SyrD (566 aa).

The region spanning 22-301 (HPWLTFFTLL…LVSAMPMLAQ (280 aa)) is the ABC transmembrane type-1 domain. Helical transmembrane passes span 24–44 (WLTF…IAVV), 61–81 (LFWF…ASLF), 132–152 (LLIM…IAYL), 158–178 (VVFA…LLFF), 250–270 (QLTL…FAVI), and 279–299 (VLAV…MPML). The ABC transporter domain occupies 343-566 (IQLKNVHMNY…VKCAVEGKRA (224 aa)). ATP is bound at residue 380–387 (GGNGCGKS).

Belongs to the ABC transporter superfamily. In terms of assembly, dimer.

It localises to the cell inner membrane. In terms of biological role, ATP-driven efflux pump necessary for the secretion of syringomycin. May specifically bind syringomycin and translocate it to the periplasmic space. SyrD is also required for full expression of the syrB gene. The chain is ATP-binding protein SyrD (syrD) from Pseudomonas syringae pv. syringae.